The chain runs to 861 residues: DNA mismatch repair protein MutS (861 aa).

616 to 623 (GPNMGGKS) is an ATP binding site.

It belongs to the DNA mismatch repair MutS family.

Functionally, this protein is involved in the repair of mismatches in DNA. It is possible that it carries out the mismatch recognition step. This protein has a weak ATPase activity. In Haemophilus influenzae (strain 86-028NP), this protein is DNA mismatch repair protein MutS.